The chain runs to 775 residues: 5-methyltetrahydropteroyltriglutamate--homocysteine methyltransferase (775 aa).

Residues 16–19 and lysine 115 each bind 5-methyltetrahydropteroyltri-L-glutamate; that span reads REMK. Residues 435–437 and glutamate 488 contribute to the L-homocysteine site; that span reads IGS. Residues 435-437 and glutamate 488 each bind L-methionine; that span reads IGS. 5-methyltetrahydropteroyltri-L-glutamate-binding positions include 519-520 and tryptophan 565; that span reads RC. Aspartate 603 is a binding site for L-homocysteine. Aspartate 603 contributes to the L-methionine binding site. A 5-methyltetrahydropteroyltri-L-glutamate-binding site is contributed by glutamate 609. Residues histidine 645, cysteine 647, and glutamate 669 each contribute to the Zn(2+) site. Histidine 698 acts as the Proton donor in catalysis. Cysteine 730 is a Zn(2+) binding site.

It belongs to the vitamin-B12 independent methionine synthase family. Zn(2+) serves as cofactor.

It carries out the reaction 5-methyltetrahydropteroyltri-L-glutamate + L-homocysteine = tetrahydropteroyltri-L-glutamate + L-methionine. It functions in the pathway amino-acid biosynthesis; L-methionine biosynthesis via de novo pathway; L-methionine from L-homocysteine (MetE route): step 1/1. Functionally, catalyzes the transfer of a methyl group from 5-methyltetrahydrofolate to homocysteine resulting in methionine formation. The sequence is that of 5-methyltetrahydropteroyltriglutamate--homocysteine methyltransferase from Coxiella burnetii (strain RSA 331 / Henzerling II).